Consider the following 255-residue polypeptide: Aliphatic sulfonates import ATP-binding protein SsuB (255 aa).

One can recognise an ABC transporter domain in the interval 5–231; it reads IRVNEKAFGK…PRSRTSPVFQ (227 aa). Residue 39–46 participates in ATP binding; sequence GPSGCGKS.

This sequence belongs to the ABC transporter superfamily. Aliphatic sulfonates importer (TC 3.A.1.17.2) family. In terms of assembly, the complex is composed of two ATP-binding proteins (SsuB), two transmembrane proteins (SsuC) and a solute-binding protein (SsuA).

The protein resides in the cell membrane. The catalysed reaction is ATP + H2O + aliphatic sulfonate-[sulfonate-binding protein]Side 1 = ADP + phosphate + aliphatic sulfonateSide 2 + [sulfonate-binding protein]Side 1.. Its function is as follows. Part of the ABC transporter complex SsuABC involved in aliphatic sulfonates import. Responsible for energy coupling to the transport system. This is Aliphatic sulfonates import ATP-binding protein SsuB from Bacillus licheniformis (strain ATCC 14580 / DSM 13 / JCM 2505 / CCUG 7422 / NBRC 12200 / NCIMB 9375 / NCTC 10341 / NRRL NRS-1264 / Gibson 46).